The sequence spans 342 residues: S-adenosylmethionine:tRNA ribosyltransferase-isomerase (342 aa).

This sequence belongs to the QueA family. Monomer.

The protein resides in the cytoplasm. It catalyses the reaction 7-aminomethyl-7-carbaguanosine(34) in tRNA + S-adenosyl-L-methionine = epoxyqueuosine(34) in tRNA + adenine + L-methionine + 2 H(+). It participates in tRNA modification; tRNA-queuosine biosynthesis. Functionally, transfers and isomerizes the ribose moiety from AdoMet to the 7-aminomethyl group of 7-deazaguanine (preQ1-tRNA) to give epoxyqueuosine (oQ-tRNA). This chain is S-adenosylmethionine:tRNA ribosyltransferase-isomerase, found in Streptococcus pyogenes serotype M1.